We begin with the raw amino-acid sequence, 252 residues long: Probable ABC transporter ATP-binding protein p29 (252 aa).

Positions 8-252 (LEIKNLTFKN…NILDQVFKND (245 aa)) constitute an ABC transporter domain. 42–49 (GSSGQGKS) provides a ligand contact to ATP.

This sequence belongs to the ABC transporter superfamily.

Part of a high-affinity transport system. This chain is Probable ABC transporter ATP-binding protein p29, found in Mesomycoplasma hyorhinis (Mycoplasma hyorhinis).